A 463-amino-acid polypeptide reads, in one-letter code: Argininosuccinate lyase (463 aa).

The protein belongs to the lyase 1 family. Argininosuccinate lyase subfamily.

The protein resides in the cytoplasm. The enzyme catalyses 2-(N(omega)-L-arginino)succinate = fumarate + L-arginine. The protein operates within amino-acid biosynthesis; L-arginine biosynthesis; L-arginine from L-ornithine and carbamoyl phosphate: step 3/3. This chain is Argininosuccinate lyase, found in Chlorobaculum parvum (strain DSM 263 / NCIMB 8327) (Chlorobium vibrioforme subsp. thiosulfatophilum).